A 305-amino-acid chain; its full sequence is Secreted mono- and diacylglycerol lipase A (305 aa).

Positions Met-1 to Arg-26 are cleaved as a signal peptide. Intrachain disulfides connect Cys-62-Cys-67 and Cys-129-Cys-132. Ser-171 acts as the Nucleophile in catalysis. Catalysis depends on Asp-225, which acts as the Charge relay system. Asn-251 carries N-linked (GlcNAc...) asparagine glycosylation. The Charge relay system role is filled by His-285. A propeptide spans Lys-303–Val-305 (removed in mature form).

This sequence belongs to the AB hydrolase superfamily. Lipase family. Class 3 subfamily. Post-translationally, multiple forms of this lipase are due to the presence of different carbohydrates, which may contribute to the stability of this lipase but not to the enzyme activity.

The protein localises to the secreted. It catalyses the reaction a monoacylglycerol + H2O = glycerol + a fatty acid + H(+). The catalysed reaction is a diacylglycerol + H2O = a monoacylglycerol + a fatty acid + H(+). Its activity is regulated as follows. Both Fe(3+) and Hg(2+) inhibit the activity significantly. In terms of biological role, secreted lipase strictly specific to mono- and diacylglycerol, but not triacylglycerol. Hydrolyzes long-chain monoacylglycerols most efficiently with the highest activities observed on 1- and 3- monopalmitoyl-sn-glycerol or 1-monostearoyl-rac-glycerol. Prefers to attack alpha positions to beta positions of monoacylglycerol, but shows no stereospecificity on mono- and diacylglycerol. The sequence is that of Secreted mono- and diacylglycerol lipase A from Penicillium camembertii.